The following is a 227-amino-acid chain: Cytochrome c oxidase subunit 2 (227 aa).

Over 1–14 the chain is Mitochondrial intermembrane; the sequence is MAYPFQMGLQDATS. The chain crosses the membrane as a helical span at residues 15 to 45; the sequence is PIMEELLHFHDHTLMIVFLISSLVLYIISLM. Over 46-59 the chain is Mitochondrial matrix; that stretch reads LTTKLTHTSTMDAQ. A helical membrane pass occupies residues 60–87; the sequence is EVETIWTILPAIILILIALPSLRILYMM. Residues 88–227 are Mitochondrial intermembrane-facing; that stretch reads DEINNPSLTV…HFEKWSASLL (140 aa). Positions 161, 196, 198, 200, 204, and 207 each coordinate Cu cation. Residue E198 coordinates Mg(2+).

It belongs to the cytochrome c oxidase subunit 2 family. In terms of assembly, component of the cytochrome c oxidase (complex IV, CIV), a multisubunit enzyme composed of 14 subunits. The complex is composed of a catalytic core of 3 subunits MT-CO1, MT-CO2 and MT-CO3, encoded in the mitochondrial DNA, and 11 supernumerary subunits COX4I, COX5A, COX5B, COX6A, COX6B, COX6C, COX7A, COX7B, COX7C, COX8 and NDUFA4, which are encoded in the nuclear genome. The complex exists as a monomer or a dimer and forms supercomplexes (SCs) in the inner mitochondrial membrane with NADH-ubiquinone oxidoreductase (complex I, CI) and ubiquinol-cytochrome c oxidoreductase (cytochrome b-c1 complex, complex III, CIII), resulting in different assemblies (supercomplex SCI(1)III(2)IV(1) and megacomplex MCI(2)III(2)IV(2)). Found in a complex with TMEM177, COA6, COX18, COX20, SCO1 and SCO2. Interacts with TMEM177 in a COX20-dependent manner. Interacts with COX20. Interacts with COX16. The cofactor is Cu cation.

It localises to the mitochondrion inner membrane. The catalysed reaction is 4 Fe(II)-[cytochrome c] + O2 + 8 H(+)(in) = 4 Fe(III)-[cytochrome c] + 2 H2O + 4 H(+)(out). In terms of biological role, component of the cytochrome c oxidase, the last enzyme in the mitochondrial electron transport chain which drives oxidative phosphorylation. The respiratory chain contains 3 multisubunit complexes succinate dehydrogenase (complex II, CII), ubiquinol-cytochrome c oxidoreductase (cytochrome b-c1 complex, complex III, CIII) and cytochrome c oxidase (complex IV, CIV), that cooperate to transfer electrons derived from NADH and succinate to molecular oxygen, creating an electrochemical gradient over the inner membrane that drives transmembrane transport and the ATP synthase. Cytochrome c oxidase is the component of the respiratory chain that catalyzes the reduction of oxygen to water. Electrons originating from reduced cytochrome c in the intermembrane space (IMS) are transferred via the dinuclear copper A center (CU(A)) of subunit 2 and heme A of subunit 1 to the active site in subunit 1, a binuclear center (BNC) formed by heme A3 and copper B (CU(B)). The BNC reduces molecular oxygen to 2 water molecules using 4 electrons from cytochrome c in the IMS and 4 protons from the mitochondrial matrix. In Ailurus fulgens (Himalayan red panda), this protein is Cytochrome c oxidase subunit 2 (MT-CO2).